The sequence spans 112 residues: uncharacterized protein (112 aa).

Residues 70–112 (GLYRGRRPPGRDAARPTTAILFAQGRPPLLDQRAPTRRGSHQR) are disordered.

This is an uncharacterized protein from Homo sapiens (Human).